The primary structure comprises 215 residues: Probable phosphoglycerate mutase GpmB (215 aa).

Substrate contacts are provided by residues 8–15, 21–22, arginine 58, arginine 60, 82–85, 104–105, and 151–152; these read RHGETQWN, QG, ELNM, RR, and GI. Histidine 9 functions as the Tele-phosphohistidine intermediate in the catalytic mechanism. Glutamate 82 (proton donor/acceptor) is an active-site residue.

It belongs to the phosphoglycerate mutase family. GpmB subfamily.

The enzyme catalyses (2R)-2-phosphoglycerate = (2R)-3-phosphoglycerate. It functions in the pathway carbohydrate degradation; glycolysis; pyruvate from D-glyceraldehyde 3-phosphate: step 3/5. In Shigella boydii serotype 18 (strain CDC 3083-94 / BS512), this protein is Probable phosphoglycerate mutase GpmB.